We begin with the raw amino-acid sequence, 244 residues long: Triosephosphate isomerase (244 aa).

9–11 serves as a coordination point for substrate; that stretch reads NWK. The active-site Electrophile is the His-93. The Proton acceptor role is filled by Glu-161. Residues Gly-167, Ser-206, and 227-228 contribute to the substrate site; that span reads GG.

Belongs to the triosephosphate isomerase family. Homodimer.

Its subcellular location is the cytoplasm. The enzyme catalyses D-glyceraldehyde 3-phosphate = dihydroxyacetone phosphate. It functions in the pathway carbohydrate biosynthesis; gluconeogenesis. It participates in carbohydrate degradation; glycolysis; D-glyceraldehyde 3-phosphate from glycerone phosphate: step 1/1. In terms of biological role, involved in the gluconeogenesis. Catalyzes stereospecifically the conversion of dihydroxyacetone phosphate (DHAP) to D-glyceraldehyde-3-phosphate (G3P). The protein is Triosephosphate isomerase of Deinococcus geothermalis (strain DSM 11300 / CIP 105573 / AG-3a).